Consider the following 134-residue polypeptide: Large ribosomal subunit protein eL32 (134 aa).

Belongs to the eukaryotic ribosomal protein eL32 family.

The polypeptide is Large ribosomal subunit protein eL32 (RpL32) (Drosophila affinis (Fruit fly)).